The chain runs to 452 residues: Pup--protein ligase (452 aa).

A Mg(2+)-binding site is contributed by E9. Position 53 (R53) interacts with ATP. Residue Y55 participates in Mg(2+) binding. Residue D57 is the Proton acceptor of the active site. E63 serves as a coordination point for Mg(2+). T66 and W419 together coordinate ATP.

The protein belongs to the Pup ligase/Pup deamidase family. Pup-conjugating enzyme subfamily.

The catalysed reaction is ATP + [prokaryotic ubiquitin-like protein]-L-glutamate + [protein]-L-lysine = ADP + phosphate + N(6)-([prokaryotic ubiquitin-like protein]-gamma-L-glutamyl)-[protein]-L-lysine.. Its pathway is protein degradation; proteasomal Pup-dependent pathway. It functions in the pathway protein modification; protein pupylation. Functionally, catalyzes the covalent attachment of the prokaryotic ubiquitin-like protein modifier Pup to the proteasomal substrate proteins, thereby targeting them for proteasomal degradation. This tagging system is termed pupylation. The ligation reaction involves the side-chain carboxylate of the C-terminal glutamate of Pup and the side-chain amino group of a substrate lysine. The chain is Pup--protein ligase from Acidothermus cellulolyticus (strain ATCC 43068 / DSM 8971 / 11B).